The chain runs to 614 residues: Vitamin B12 transporter BtuB (614 aa).

The signal sequence occupies residues 1–20 (MIKKASLLTACSVTAFSAWA). The short motif at 26–33 (DTLVVTAN) is the TonB box element. The TBDR plug domain maps to 38 to 152 (PRSTVLAPTT…IGGVVNIITT (115 aa)). Residues L83, S85, N92, and 110 to 111 (VS) contribute to the cyanocob(III)alamin site. Positions 155-614 (HPGTEISAGW…EYTLXGSYTF (460 aa)) constitute a TBDR beta-barrel domain. A run of 3 beta stranded transmembrane segments spans residues 158 to 165 (TEISAGWG), 169 to 178 (YQNYDVSTQQ), and 184 to 195 (TRVTLLGDYAHT). 4 residues coordinate Ca(2+): D199, Q211, D213, and D215. Beta stranded transmembrane passes span 217 to 227 (FLSKTLYGALE) and 232 to 248 (DAWS…NRTN). Ca(2+) is bound by residues Y249 and D250. A251 lines the cyanocob(III)alamin pocket. Residue D261 coordinates Ca(2+). 14 beta stranded membrane passes run 263 to 277 (RKLY…LRYN), 279 to 296 (ELIK…KDYN), 309 to 325 (TLDE…NNII), 328 to 337 (HGNIGAGVDW), 353 to 369 (YDQR…QQVG), 371 to 381 (FTFEGAGRSDD), 385 to 400 (FGRH…WEFI), 403 to 417 (YRFI…KAPN), 434 to 443 (KSKQWEGAFE), 449 to 458 (VNWRISGYRN), 473 to 490 (YYNE…TANF), 494 to 509 (PLTH…ARNA), 517 to 529 (RRAK…QLDW), and 535 to 550 (DWGI…YDKD). T309 provides a ligand contact to cyanocob(III)alamin. R517 is a cyanocob(III)alamin binding site. A cyanocob(III)alamin-binding site is contributed by Y551. The next 3 beta stranded transmembrane spans lie at 558–572 (TVKM…LAVA), 585–596 (IANLFDKDYETV), and 602–614 (AGRE…SYTF). The TonB C-terminal box motif lies at 597 to 614 (YGYQTAGREYTLXGSYTF).

Belongs to the TonB-dependent receptor family. BtuB (TC 1.B.14.3.1) subfamily.

It localises to the cell outer membrane. Functionally, involved in the active translocation of vitamin B12 (cyanocobalamin) across the outer membrane to the periplasmic space. It derives its energy for transport by interacting with the trans-periplasmic membrane protein TonB. In Escherichia coli O6:H1 (strain CFT073 / ATCC 700928 / UPEC), this protein is Vitamin B12 transporter BtuB.